We begin with the raw amino-acid sequence, 430 residues long: Maltoporin (430 aa).

An N-terminal signal peptide occupies residues 1–23 (MNNKKTLLAVAISGMMFATSAAA).

This sequence belongs to the porin LamB (TC 1.B.3) family. Homotrimer formed of three 18-stranded antiparallel beta-barrels, containing three independent channels.

The protein resides in the cell outer membrane. The enzyme catalyses beta-maltose(in) = beta-maltose(out). In terms of biological role, involved in the transport of maltose and maltodextrins. This is Maltoporin from Actinobacillus succinogenes (strain ATCC 55618 / DSM 22257 / CCUG 43843 / 130Z).